The chain runs to 147 residues: Thyrotropin subunit beta (147 aa).

A signal peptide spans 1–20; it reads MRVVLLASAVLCLLAGQVLS. 6 cysteine pairs are disulfide-bonded: Cys22–Cys72, Cys36–Cys87, Cys39–Cys126, Cys47–Cys103, Cys51–Cys105, and Cys108–Cys115. N-linked (GlcNAc...) asparagine glycosylation is present at Asn43.

The protein belongs to the glycoprotein hormones subunit beta family. As to quaternary structure, heterodimer of a common alpha chain and a unique beta chain which confers biological specificity to thyrotropin, lutropin, follitropin and gonadotropin.

It is found in the secreted. Its function is as follows. Indispensable for the control of thyroid structure and metabolism. May play some role in the biological processes of the immature fishes. The polypeptide is Thyrotropin subunit beta (tshb) (Anguilla anguilla (European freshwater eel)).